Consider the following 130-residue polypeptide: Metastasis-suppressor KiSS-1 (130 aa).

The signal sequence occupies residues 1–19 (MISMASWQLLLLLCVATYG). The disordered stretch occupies residues 49–82 (KESRYAESKPGSAGLRARRSSPCPPVEGPAGRQR). A disulfide bridge connects residues cysteine 71 and cysteine 85. At tyrosine 110 the chain carries Phosphotyrosine. Residues 110–119 (YNWNSFGLRY) are essential for receptor binding and receptor activation. The residue at position 119 (tyrosine 119) is a Tyrosine amide.

It belongs to the KISS1 family. As to expression, weak in all tissue types with highest levels in lung and 15- 17-day embryos. Expressed in areas of the hypothalamus implicated in the neuroendocrine regulation of gonadotropin secretion, including the anteroventral periventricular nucleus, the periventricular nucleus, and the arcuate nucleus.

Its subcellular location is the secreted. Its function is as follows. Metastasis suppressor protein. May regulate events downstream of cell-matrix adhesion, perhaps involving cytoskeletal reorganization. Generates a C-terminally amidated peptide, metastin which functions as the endogenous ligand of the G-protein coupled receptor GPR54. Activation of the receptor inhibits cell proliferation and cell migration, key characteristics of tumor metastasis. The receptor is also essential for normal gonadotropin-released hormone physiology and for puberty. The hypothalamic KiSS1/GPR54 system is a pivotal factor in central regulation of the gonadotropic axis at puberty and in adulthood. Intracerebroventricular administration induces an increase in serum LH and FSH levels in prepubertal male and female as well as in adult animals. The polypeptide is Metastasis-suppressor KiSS-1 (Kiss1) (Mus musculus (Mouse)).